The primary structure comprises 381 residues: Chymosin (381 aa).

The signal sequence occupies residues 1–16 (MRGFVVLLAVFALSQA). The propeptide at 17 to 58 (SGIVRIPLHKGKSLRRALKERGLLEDFLKNHQHAVSRKHSNS) is activation peptide. The Peptidase A1 domain occupies 74–378 (YFGKIYIGTP…DRASNLVGLA (305 aa)). Residue aspartate 92 is part of the active site. Repeat unit 1 spans residues 92–102 (DTGSSDLWVPS). 2 disulfides stabilise this stretch: cysteine 105–cysteine 110 and cysteine 265–cysteine 269. Aspartate 274 is a catalytic residue. Residues 274-284 (DTGTSMLVGPG) form repeat 2. A disulfide bridge links cysteine 308 with cysteine 341.

The protein belongs to the peptidase A1 family. Monomer.

It carries out the reaction Broad specificity similar to that of pepsin A. Clots milk by cleavage of a single 104-Ser-Phe-|-Met-Ala-107 bond in kappa-chain of casein.. Its activity is regulated as follows. Inhibited by pepstatin. In terms of biological role, hydrolyzes a variety of proteins. The polypeptide is Chymosin (CYM) (Callithrix jacchus (White-tufted-ear marmoset)).